Here is a 143-residue protein sequence, read N- to C-terminus: Transcription antitermination protein NusB (143 aa).

The protein belongs to the NusB family.

Involved in transcription antitermination. Required for transcription of ribosomal RNA (rRNA) genes. Binds specifically to the boxA antiterminator sequence of the ribosomal RNA (rrn) operons. The polypeptide is Transcription antitermination protein NusB (Anaeromyxobacter sp. (strain Fw109-5)).